Consider the following 273-residue polypeptide: Kit ligand (273 aa).

The N-terminal stretch at methionine 1–threonine 25 is a signal peptide. Over lysine 26–glutamine 214 the chain is Extracellular. Disulfide bonds link cysteine 29–cysteine 114 and cysteine 68–cysteine 163. N-linked (GlcNAc...) asparagine glycosylation is found at asparagine 90, asparagine 97, asparagine 145, and asparagine 195. Positions alanine 190 to aspartate 210 are disordered. The span at serine 191–arginine 202 shows a compositional bias: low complexity. A helical transmembrane segment spans residues tryptophan 215–tryptophan 237. The Cytoplasmic segment spans residues lysine 238–valine 273.

This sequence belongs to the SCF family. In terms of assembly, homodimer, non-covalently linked. Heterotetramer with KIT, binding two KIT molecules; thereby mediates KIT dimerization and subsequent activation by autophosphorylation. In terms of processing, a soluble form is produced by proteolytic processing of isoform 1 in the extracellular domain. As to expression, expressed in the cochlea.

It is found in the cell membrane. The protein localises to the cytoplasm. Its subcellular location is the cytoskeleton. It localises to the cell projection. The protein resides in the lamellipodium. It is found in the filopodium. The protein localises to the secreted. Its function is as follows. Ligand for the receptor-type protein-tyrosine kinase KIT. Plays an essential role in the regulation of cell survival and proliferation, hematopoiesis, stem cell maintenance, gametogenesis, mast cell development, migration and function, and in melanogenesis. KITLG/SCF binding can activate several signaling pathways. Promotes phosphorylation of PIK3R1, the regulatory subunit of phosphatidylinositol 3-kinase, and subsequent activation of the kinase AKT1. KITLG/SCF and KIT also transmit signals via GRB2 and activation of RAS, RAF1 and the MAP kinases MAPK1/ERK2 and/or MAPK3/ERK1. KITLG/SCF and KIT promote activation of STAT family members STAT1, STAT3 and STAT5. KITLG/SCF and KIT promote activation of PLCG1, leading to the production of the cellular signaling molecules diacylglycerol and inositol 1,4,5-trisphosphate. KITLG/SCF acts synergistically with other cytokines, probably interleukins. This chain is Kit ligand (Kitlg), found in Mus musculus (Mouse).